The following is a 331-amino-acid chain: DNA-directed RNA polymerase subunit alpha (331 aa).

Positions 1-225 are alpha N-terminal domain (alpha-NTD); sequence MLDIAMPKLE…QYSSIIADFN (225 aa). The tract at residues 243 to 331 is alpha C-terminal domain (alpha-CTD); the sequence is PSEIYDMPIE…AARLNDGSAE (89 aa).

This sequence belongs to the RNA polymerase alpha chain family. Homodimer. The RNAP catalytic core consists of 2 alpha, 1 beta, 1 beta' and 1 omega subunit. When a sigma factor is associated with the core the holoenzyme is formed, which can initiate transcription.

The enzyme catalyses RNA(n) + a ribonucleoside 5'-triphosphate = RNA(n+1) + diphosphate. Functionally, DNA-dependent RNA polymerase catalyzes the transcription of DNA into RNA using the four ribonucleoside triphosphates as substrates. The sequence is that of DNA-directed RNA polymerase subunit alpha from Herpetosiphon aurantiacus (strain ATCC 23779 / DSM 785 / 114-95).